Reading from the N-terminus, the 323-residue chain is o-succinylbenzoate synthase (323 aa).

Lysine 134 acts as the Proton donor in catalysis. Mg(2+) is bound by residues aspartate 162, glutamate 191, and aspartate 214. Lysine 236 (proton acceptor) is an active-site residue.

This sequence belongs to the mandelate racemase/muconate lactonizing enzyme family. MenC type 1 subfamily. A divalent metal cation serves as cofactor.

The enzyme catalyses (1R,6R)-6-hydroxy-2-succinyl-cyclohexa-2,4-diene-1-carboxylate = 2-succinylbenzoate + H2O. It functions in the pathway quinol/quinone metabolism; 1,4-dihydroxy-2-naphthoate biosynthesis; 1,4-dihydroxy-2-naphthoate from chorismate: step 4/7. It participates in quinol/quinone metabolism; menaquinone biosynthesis. Its function is as follows. Converts 2-succinyl-6-hydroxy-2,4-cyclohexadiene-1-carboxylate (SHCHC) to 2-succinylbenzoate (OSB). In Pectobacterium atrosepticum (strain SCRI 1043 / ATCC BAA-672) (Erwinia carotovora subsp. atroseptica), this protein is o-succinylbenzoate synthase.